The following is a 306-amino-acid chain: Leucine-rich repeat-containing protein 75B (306 aa).

The tract at residues 1–22 (MGARLGRRARADAPAAPSAGPA) is disordered. Positions 12–22 (DAPAAPSAGPA) are enriched in low complexity. 2 LRR repeats span residues 173-186 (LVVLDLSFTELSDE) and 198-211 (LPRLTQLLLNGNRL).

This sequence belongs to the LRRC75 family.

Functionally, may suppress myogenic differentiation by modulating MYOG expression and Erk1/2 signaling. This is Leucine-rich repeat-containing protein 75B from Mus musculus (Mouse).